The primary structure comprises 658 residues: UvrABC system protein B (658 aa).

The Helicase ATP-binding domain maps to 25 to 416 (KSLKNNNHYQ…QKNVAEQIIR (392 aa)). 38 to 45 (GVTGSGKT) serves as a coordination point for ATP. A Beta-hairpin motif is present at residues 91–114 (HFDYYQPESYIPRRDLFIEKDSSI). The region spanning 433–607 (QVQDLFDEIK…ELKLRDDEIK (175 aa)) is the Helicase C-terminal domain. The UVR domain occupies 623–658 (EKIIKELDKKMRERAKNLDFEEAMRLRDEIAQLRTL).

It belongs to the UvrB family. In terms of assembly, forms a heterotetramer with UvrA during the search for lesions. Interacts with UvrC in an incision complex.

The protein localises to the cytoplasm. Functionally, the UvrABC repair system catalyzes the recognition and processing of DNA lesions. A damage recognition complex composed of 2 UvrA and 2 UvrB subunits scans DNA for abnormalities. Upon binding of the UvrA(2)B(2) complex to a putative damaged site, the DNA wraps around one UvrB monomer. DNA wrap is dependent on ATP binding by UvrB and probably causes local melting of the DNA helix, facilitating insertion of UvrB beta-hairpin between the DNA strands. Then UvrB probes one DNA strand for the presence of a lesion. If a lesion is found the UvrA subunits dissociate and the UvrB-DNA preincision complex is formed. This complex is subsequently bound by UvrC and the second UvrB is released. If no lesion is found, the DNA wraps around the other UvrB subunit that will check the other stand for damage. In Helicobacter pylori (strain J99 / ATCC 700824) (Campylobacter pylori J99), this protein is UvrABC system protein B.